The sequence spans 397 residues: Protein Rep52 (397 aa).

The 156-residue stretch at 84 to 239 folds into the SF3 helicase domain; sequence DPQYAASVFL…LDHDFGKVTK (156 aa). 110-117 contributes to the ATP binding site; it reads GPATTGKT. The tract at residues 265–296 is disordered; sequence GGAKKRPAPSDADISEPKRVRESVAQPSTSDA.

As to quaternary structure, homooligomer. Interacts with host PRKX.

The protein localises to the host nucleus. Functionally, plays a critical role during packaging of viral DNA into empty capsids, where they are thought to be part of the packaging motor complex. The single stranded genomic DNA is packaged in a 3' to 5' direction and requires the association between viral DNA and Rep40. Regulates host PKA activity by interacting with host PRKX as a mechanism to interfere with helper virus propagation and to promote its own replication. This Mammalia (AAV-2) protein is Protein Rep52 (Rep52).